The chain runs to 212 residues: Redox-sensing transcriptional repressor Rex (212 aa).

A DNA-binding region (H-T-H motif) is located at residues 17–56; it reads KYHRYLQELMENDIDRISSKELSEKIGFTASQIRQDLNCF. Position 91 to 96 (91 to 96) interacts with NAD(+); the sequence is GAGNIG.

This sequence belongs to the transcriptional regulatory Rex family. Homodimer.

Its subcellular location is the cytoplasm. Functionally, modulates transcription in response to changes in cellular NADH/NAD(+) redox state. The protein is Redox-sensing transcriptional repressor Rex of Clostridium perfringens (strain SM101 / Type A).